A 707-amino-acid chain; its full sequence is Solute carrier family 15 member 1 (707 aa).

The helical transmembrane segment at 1–21 (MGMSKSLSCFGYPLSIFFIVV) threads the bilayer. Over 22-53 (NEFCERFSYYGMRALLILYFRNFIGWDDNLST) the chain is Extracellular. Residue Asn50 is glycosylated (N-linked (GlcNAc...) asparagine). Residues 54–74 (VIYHTFVALCYLTPILGALIA) form a helical membrane-spanning segment. Residues 75-82 (DAWLGKFK) lie on the Cytoplasmic side of the membrane. The chain crosses the membrane as a helical span at residues 83–103 (TIVWLSIVYTIGQAVTSLSSV). The Extracellular portion of the chain corresponds to 104–118 (NELTDNNHDGTPDSL). A helical transmembrane segment spans residues 119–139 (PVHVAVCMIGLLLIALGTGGI). The Cytoplasmic portion of the chain corresponds to 140 to 161 (KPCVSAFGGDQFEEGQEKQRNR). The helical transmembrane segment at 162 to 182 (FFSIFYLAINAGSLLSTIITP) threads the bilayer. Residues 183-198 (MVRVQQCGIHVKQACY) lie on the Extracellular side of the membrane. The chain crosses the membrane as a helical span at residues 199-219 (PLAFGIPAILMAVSLIVFIIG). The Cytoplasmic portion of the chain corresponds to 220-276 (SGMYKKFKPQGNILSKVVKCICFAIKNRFRHRSKQFPKRAHWLDWAKEKYDERLIAQ). The helical transmembrane segment at 277–297 (IKMVTRVLFLYIPLPMFWALF) threads the bilayer. Topologically, residues 298–327 (DQQGSRWTLQATTMSGRIGILEIQPDQMQT) are extracellular. The chain crosses the membrane as a helical span at residues 328–348 (VNTILIIILVPIMDAVVYPLI). Residues 349–361 (AKCGLNFTSLKKM) are Cytoplasmic-facing. A helical transmembrane segment spans residues 362 to 382 (TIGMFLASMAFVAAAILQVEI). At 383-583 (DKTLPVFPKA…PPNTMNMAWQ (201 aa)) the chain is on the extracellular side. The extracellular domain (ECD) stretch occupies residues 383-583 (DKTLPVFPKA…PPNTMNMAWQ (201 aa)). Residues Asn439, Asn498, and Asn513 are each glycosylated (N-linked (GlcNAc...) asparagine). A helical transmembrane segment spans residues 584-604 (IPQYFLITSGEVVFSITGLEF). Over 605–618 (SYSQAPSNMKSVLQ) the chain is Cytoplasmic. A helical membrane pass occupies residues 619–639 (AGWLLTVAVGNIIVLIVAGAG). Residues 640 to 644 (QINKQ) lie on the Extracellular side of the membrane. Residues 645–665 (WAEYILFAALLLVVCVIFAIM) form a helical membrane-spanning segment. The Cytoplasmic portion of the chain corresponds to 666-707 (ARFYTYVNPAEIEAQFEEDEKKKNPEKNDLYPSLAPVSQTQM). A disordered region spans residues 682-707 (EEDEKKKNPEKNDLYPSLAPVSQTQM). The span at 684-694 (DEKKKNPEKND) shows a compositional bias: basic and acidic residues.

Belongs to the major facilitator superfamily. Proton-dependent oligopeptide transporter (POT/PTR) (TC 2.A.17) family. Interacts (via extracellular domain region) with trypsin. Intestine, kidney, liver and low in brain.

The protein resides in the apical cell membrane. The enzyme catalyses a dipeptide(out) + H(+)(out) = a dipeptide(in) + H(+)(in). The catalysed reaction is an L-amino acid tripeptide(out) + H(+)(out) = an L-amino acid tripeptide(in) + H(+)(in). It catalyses the reaction L-alanyl-L-lysine(out) + H(+)(out) = L-alanyl-L-lysine(in) + H(+)(in). It carries out the reaction L-alanyl-L-proline(out) + H(+)(out) = L-alanyl-L-proline(in) + H(+)(in). The enzyme catalyses L-alanyl-L-valine(out) + H(+)(out) = L-alanyl-L-valine(in) + H(+)(in). The catalysed reaction is carnosine(out) + H(+)(out) = carnosine(in) + H(+)(in). It catalyses the reaction glycyl-L-glutamine(out) + H(+)(out) = glycyl-L-glutamine(in) + H(+)(in). It carries out the reaction glycyl-L-leucine(out) + H(+)(out) = glycyl-L-leucine(in) + H(+)(in). The enzyme catalyses glycyl-L-proline(out) + H(+)(out) = glycyl-L-proline(in) + H(+)(in). The catalysed reaction is glycyl-sarcosine(out) + H(+)(out) = glycyl-sarcosine(in) + H(+)(in). It catalyses the reaction L-leucyl-L-leucine(out) + H(+)(out) = L-leucyl-L-leucine(in) + H(+)(in). It carries out the reaction L-leucyl-L-proline(out) + H(+)(out) = L-leucyl-L-proline(in) + H(+)(in). The enzyme catalyses L-phenylalanyl-L-leucine(out) + H(+)(out) = L-phenylalanyl-L-leucine(in) + H(+)(in). The catalysed reaction is L-phenylalanyl-L-phenylalanine(out) + H(+)(out) = L-phenylalanyl-L-phenylalanine(in) + H(+)(in). It catalyses the reaction L-lysyl-glycine(out) + H(+)(out) = L-lysyl-glycine(in) + H(+)(in). It carries out the reaction L-tyrosylglycine(out) + H(+)(out) = L-tyrosylglycine(in) + H(+)(in). The enzyme catalyses L-alanyl-L-aspartate(out) + 2 H(+)(out) = L-alanyl-L-aspartate(in) + 2 H(+)(in). The catalysed reaction is L-aspartyl-glycine(out) + 2 H(+)(out) = L-aspartyl-glycine(in) + 2 H(+)(in). It catalyses the reaction glycyl-L-aspartate(out) + 2 H(+)(out) = glycyl-L-aspartate(in) + 2 H(+)(in). It carries out the reaction glycyl-L-glutamate(out) + 2 H(+)(out) = glycyl-L-glutamate(in) + 2 H(+)(in). The enzyme catalyses L-alanyl-L-leucyl-L-alanine(out) + H(+)(out) = L-alanyl-L-leucyl-L-alanine(in) + H(+)(in). The catalysed reaction is L-alanyl-L-prolylglycine(out) + H(+)(out) = L-alanyl-L-prolylglycine(in) + H(+)(in). It catalyses the reaction glycylglycyl-L-isoleucine(out) + H(+)(out) = glycylglycyl-L-isoleucine(in) + H(+)(in). It carries out the reaction glycylglycyl-L-proline(out) + H(+)(out) = glycylglycyl-L-proline(in) + H(+)(in). The enzyme catalyses L-methionyl-L-phenylalanyl-L-methionine(out) + H(+)(out) = L-methionyl-L-phenylalanyl-L-methionine(in) + H(+)(in). The catalysed reaction is N-acetyl-D-muramoyl-L-alanyl-D-isoglutamine(out) + 2 H(+)(out) = N-acetyl-D-muramoyl-L-alanyl-D-isoglutamine(in) + 2 H(+)(in). It catalyses the reaction N(alpha)-formyl-L-methionyl-L-leucyl-L-phenylalanine(out) + 2 H(+)(out) = N(alpha)-formyl-L-methionyl-L-leucyl-L-phenylalanine(in) + 2 H(+)(in). Functionally, electrogenic proton-coupled amino-acid transporter that transports oligopeptides of 2 to 4 amino acids with a preference for dipeptides. Transports neutral and monovalently charged peptides with a proton to peptide stoichiometry of 1:1 or 2:1. Primarily responsible for the absorption of dietary di- and tripeptides from the small intestinal lumen. Mediates transepithelial transport of muramyl and N-formylated bacterial dipeptides contributing to recognition of pathogenic bacteria by the mucosal immune system. The chain is Solute carrier family 15 member 1 (SLC15A1) from Oryctolagus cuniculus (Rabbit).